The following is a 192-amino-acid chain: NF-kappa-B inhibitor-interacting Ras-like protein 1 (192 aa).

Position 11–18 (11–18) interacts with GTP; the sequence is GLLSVGKT. The short motif at 35 to 43 is the Effector region element; that stretch reads DCETMEDVY. The tract at residues 58–93 is interactions with NFKBIA and NFKBIB; it reads HLYDTRGLQEGVELPKHYFSFADGFVLVYSVNNLES. Residues 61-65 and 120-123 each bind GTP; these read DTRGL and NKID. The interval 168–192 is disordered; it reads LSQPQSKSSFPLPGRKNKGNSNSEN.

The protein belongs to the small GTPase superfamily. Ras family. KappaB-Ras subfamily. As to quaternary structure, interacts with both NF-kappa-B inhibitor alpha (NFKBIA) and beta (NFKBIB) in vitro. However, it probably only interacts with NFKBIB in vivo. Forms a complex with NFKBIB and NF-kappa-B heterodimer (p50/NFKB1 and p65/RELA). Also interacts with c-Rel (REL). As to expression, widely expressed.

It localises to the cytoplasm. Its function is as follows. Atypical Ras-like protein that acts as a potent regulator of NF-kappa-B activity by preventing the degradation of NF-kappa-B inhibitor beta (NFKBIB) by most signals, explaining why NFKBIB is more resistant to degradation. May act by blocking phosphorylation of NFKBIB and mediating cytoplasmic retention of p65/RELA NF-kappa-B subunit. It is unclear whether it acts as a GTPase. Both GTP- and GDP-bound forms block phosphorylation of NFKBIB. The protein is NF-kappa-B inhibitor-interacting Ras-like protein 1 (NKIRAS1) of Homo sapiens (Human).